The following is a 285-amino-acid chain: Protein pxr1 (285 aa).

Basic residues predominate over residues 1–11 (MGLAAPRKKIK). The tract at residues 1 to 23 (MGLAAPRKKIKISHDPNNTNWSR) is disordered. One can recognise a G-patch domain in the interval 25–79 (TSGFGHKILSSQGWTPGSFLGARNAAHAEMFTAASASHIKVVLKDDTLGLGARPK). The tract at residues 144 to 263 (TPIVTEEPQG…MGRHVFRGRH (120 aa)) is disordered. A compositionally biased stretch (basic and acidic residues) spans 152–163 (QGIHKDKQEDKL). Basic residues predominate over residues 190-208 (KKKKSKSKNHREKKDRKRK). A compositionally biased stretch (basic and acidic residues) spans 224 to 234 (RSTEKKSKATR). Residues 254-263 (MGRHVFRGRH) show a composition bias toward basic residues.

This sequence belongs to the PINX1 family.

Its subcellular location is the nucleus. It is found in the nucleolus. In terms of biological role, involved in rRNA-processing at A0, A1 and A2 sites and negatively regulates telomerase. The chain is Protein pxr1 (pxr1) from Aspergillus niger (strain ATCC MYA-4892 / CBS 513.88 / FGSC A1513).